The chain runs to 175 residues: Large ribosomal subunit protein uL10 (175 aa).

This sequence belongs to the universal ribosomal protein uL10 family. In terms of assembly, part of the ribosomal stalk of the 50S ribosomal subunit. The N-terminus interacts with L11 and the large rRNA to form the base of the stalk. The C-terminus forms an elongated spine to which L12 dimers bind in a sequential fashion forming a multimeric L10(L12)X complex.

Functionally, forms part of the ribosomal stalk, playing a central role in the interaction of the ribosome with GTP-bound translation factors. In Mycolicibacterium smegmatis (strain ATCC 700084 / mc(2)155) (Mycobacterium smegmatis), this protein is Large ribosomal subunit protein uL10.